Reading from the N-terminus, the 288-residue chain is Protoheme IX farnesyltransferase 2 (288 aa).

The next 9 membrane-spanning stretches (helical) occupy residues 8–28 (ITKP…FFLA), 36–56 (LMLF…GCVV), 85–105 (VAFV…FQLV), 108–128 (LSAV…TMWY), 131–151 (NSVY…LVGY), 152–172 (LAVT…FCLW), 211–231 (AYVV…EAGY), 233–252 (YLAV…FRSI), and 267–287 (VSLL…IPLA).

The protein belongs to the UbiA prenyltransferase family. Protoheme IX farnesyltransferase subfamily.

The protein localises to the cell inner membrane. The enzyme catalyses heme b + (2E,6E)-farnesyl diphosphate + H2O = Fe(II)-heme o + diphosphate. Its pathway is porphyrin-containing compound metabolism; heme O biosynthesis; heme O from protoheme: step 1/1. In terms of biological role, converts heme B (protoheme IX) to heme O by substitution of the vinyl group on carbon 2 of heme B porphyrin ring with a hydroxyethyl farnesyl side group. This is Protoheme IX farnesyltransferase 2 from Vibrio parahaemolyticus serotype O3:K6 (strain RIMD 2210633).